The sequence spans 302 residues: MKLSALKRCVMGSVRWAFQCGSWCPSQAEWLLCARCVQPEEKQRIGHFMFTRDAKAAMAGRLLMRKVIADKLQIPWDRILLERTGKGKPFLTGGSSSEYPCFNFNVSHQGDYAVLAAEPDRQVGVDIMKTDLPGSSSIEEFFRLMNRQFTEKEWNSIRSMNNDWARLDMFYRHWALKESFIKAIGVGLGFNLQRIEFEVSPVTMEIGKIYKETKMFLDDEEETWTFEEILLDNQHHVAIALGEVDHLQHQSPKIGDVAESTFTLLNFEDLMVSAIPMSDEDPDYWINFQSKQELPFRQRRSR.

Residues R44, 83–88, and 105–108 each bind CoA; these read RTGKGK and NVSH. Mg(2+) is bound by residues D126 and E178. 178–182 serves as a coordination point for CoA; the sequence is ESFIK.

This sequence belongs to the P-Pant transferase superfamily. AcpS family. As to quaternary structure, monomer. It depends on Mg(2+) as a cofactor.

The protein localises to the cytoplasm. It localises to the cytosol. The enzyme catalyses apo-[ACP] + CoA = holo-[ACP] + adenosine 3',5'-bisphosphate + H(+). It carries out the reaction apo-[ACP] + acetyl-CoA = acetyl-[ACP] + adenosine 3',5'-bisphosphate + H(+). Its function is as follows. Catalyzes the post-translational modification of target proteins by phosphopantetheine. Can transfer the 4'-phosphopantetheine moiety from coenzyme A, regardless of whether the CoA is presented in the free thiol form or as an acetyl thioester, to a serine residue of a broad range of acceptors. The chain is L-aminoadipate-semialdehyde dehydrogenase-phosphopantetheinyl transferase (aasdhppt) from Xenopus laevis (African clawed frog).